Reading from the N-terminus, the 110-residue chain is U32-theraphotoxin-Cg1a (110 aa).

The signal sequence occupies residues 1 to 19; that stretch reads MNHCFLILFTLIVFTVVWS. Positions 20–43 are excised as a propeptide; sequence LEENEEYPDEDEMIESFMDGYSYR. 4 cysteine pairs are disulfide-bonded: C49-C63, C56-C69, C60-C105, and C62-C80.

Belongs to the neurotoxin 03 (Tx2) family. 02 subfamily. In terms of tissue distribution, expressed by the venom gland.

It localises to the secreted. Probable ion channel inhibitor. In Chilobrachys guangxiensis (Chinese earth tiger tarantula), this protein is U32-theraphotoxin-Cg1a.